The primary structure comprises 308 residues: Staphylococcal superantigen-like 4 (308 aa).

The signal sequence occupies residues 1–30 (MKITTIAKTSLALGLLTTGVITTTTQAANA). The segment at 28 to 117 (ANATTPSSTK…TTKQVPTEIN (90 aa)) is disordered. Polar residues-rich tracts occupy residues 33–47 (PSST…TPPS) and 55–76 (SKPN…TANA). The span at 77-93 (TTPPSTKVTTPPSTNTP) shows a compositional bias: low complexity. The segment covering 94-114 (QPMQSTKSDTPQSPTTKQVPT) has biased composition (polar residues). The interval 180–278 (VDVFVVLEEN…VIKMKNGGKY (99 aa)) is sialyl Lewis X-binding.

Belongs to the staphylococcal/streptococcal toxin family.

It localises to the secreted. In terms of biological role, secreted protein that plays a role in immune innate response inhibition by interfering with host TLR2-mediated pathway. This is Staphylococcal superantigen-like 4 from Staphylococcus aureus (strain Newman).